Here is an 82-residue protein sequence, read N- to C-terminus: U-scoloptoxin(21)-Sm3a (82 aa).

The N-terminal stretch at 1–21 is a signal peptide; the sequence is MKIIALLLMVFLDFIIVNXAE.

This sequence belongs to the scoloptoxin-21 family. In terms of tissue distribution, expressed by the venom gland.

The protein localises to the secreted. The protein is U-scoloptoxin(21)-Sm3a of Scolopendra morsitans (Tanzanian blue ringleg centipede).